An 8886-amino-acid chain; its full sequence is Obscurin (8886 aa).

Ig-like domains lie at proline 9 to aspartate 99, proline 109 to aspartate 201, proline 234 to serine 320, and proline 329 to serine 415. A disulfide bridge connects residues cysteine 30 and cysteine 81. The segment at serine 135–serine 165 is disordered. Over residues lysine 144–glutamate 164 the composition is skewed to basic and acidic residues. Disulfide bonds link cysteine 257/cysteine 309 and cysteine 352/cysteine 402. Residue serine 393 is modified to Phosphoserine. Residues proline 513–methionine 610 enclose the Fibronectin type-III 1 domain. Ig-like domains follow at residues proline 702 to threonine 793, proline 859 to proline 951, proline 951 to proline 1043, proline 1043 to proline 1135, proline 1135 to proline 1227, proline 1227 to proline 1319, proline 1319 to aspartate 1407, proline 1411 to proline 1503, proline 1503 to proline 1595, proline 1595 to proline 1687, proline 1687 to proline 1779, proline 1779 to proline 1871, proline 1871 to proline 1963, proline 1963 to aspartate 2051, threonine 2055 to alanine 2147, proline 2152 to alanine 2241, alanine 2242 to threonine 2325, proline 2329 to arginine 2415, proline 2420 to asparagine 2504, proline 2598 to arginine 2681, proline 2721 to threonine 2812, proline 2900 to threonine 2984, proline 3078 to serine 3162, proline 3258 to cysteine 3342, asparagine 3348 to leucine 3431, proline 3527 to valine 3610, proline 3616 to threonine 3700, alanine 3785 to threonine 3876, proline 3881 to threonine 3964, proline 4042 to serine 4125, proline 4130 to serine 4213, proline 4219 to asparagine 4301, proline 4307 to threonine 4389, proline 4395 to serine 4477, proline 4483 to serine 4565, proline 4571 to serine 4653, proline 4659 to serine 4741, proline 4746 to serine 4829, proline 4833 to threonine 4916, proline 4923 to serine 5007, proline 5013 to threonine 5105, leucine 5378 to serine 5464, and proline 5557 to valine 5659. Disulfide bonds link cysteine 885–cysteine 935, cysteine 977–cysteine 1027, cysteine 1069–cysteine 1119, cysteine 1161–cysteine 1211, cysteine 1253–cysteine 1303, cysteine 1345–cysteine 1395, cysteine 1437–cysteine 1487, cysteine 1529–cysteine 1579, cysteine 1621–cysteine 1671, cysteine 1713–cysteine 1763, cysteine 1805–cysteine 1855, cysteine 1897–cysteine 1947, cysteine 1989–cysteine 2039, and cysteine 2081–cysteine 2131. Cysteine 2263 and cysteine 2313 form a disulfide bridge. 8 cysteine pairs are disulfide-bonded: cysteine 2620–cysteine 2669, cysteine 2743–cysteine 2793, cysteine 2922–cysteine 2972, cysteine 3100–cysteine 3150, cysteine 3280–cysteine 3330, cysteine 3369–cysteine 3419, cysteine 3549–cysteine 3599, and cysteine 3638–cysteine 3688. The residue at position 3321 (serine 3321) is a Phosphoserine. Phosphoserine is present on serine 3802. 14 cysteine pairs are disulfide-bonded: cysteine 3815–cysteine 3864, cysteine 3903–cysteine 3952, cysteine 4064–cysteine 4113, cysteine 4152–cysteine 4201, cysteine 4240–cysteine 4289, cysteine 4328–cysteine 4377, cysteine 4416–cysteine 4465, cysteine 4504–cysteine 4553, cysteine 4592–cysteine 4641, cysteine 4680–cysteine 4729, cysteine 4768–cysteine 4817, cysteine 4856–cysteine 4906, cysteine 4945–cysteine 4995, and cysteine 5034–cysteine 5086. Serine 4960 carries the phosphoserine modification. The region spanning proline 5471–alanine 5569 is the Fibronectin type-III 2 domain. Cysteine 5590 and cysteine 5643 are joined by a disulfide. Serine 5699 carries the phosphoserine modification. The interval arginine 5700 to serine 5736 is disordered. Phosphothreonine is present on threonine 5703. Serine 5706 carries the post-translational modification Phosphoserine. Residues glutamate 5713–alanine 5724 show a composition bias toward basic and acidic residues. Position 5737 is a phosphothreonine (threonine 5737). Position 5754 is a phosphoserine (serine 5754). The 30-residue stretch at leucine 5821–serine 5850 folds into the IQ domain. The Ig-like 48 domain occupies proline 5847–serine 5930. A disulfide bridge links cysteine 5868 with cysteine 5920. The tract at residues glutamate 5977–aspartate 5996 is disordered. Ig-like domains lie at proline 6077–arginine 6166, proline 6209–leucine 6298, and proline 6320–serine 6416. Cysteine 6098 and cysteine 6150 are joined by a disulfide. Residues lysine 6504–serine 6546 form a disordered region. A Phosphoserine modification is found at serine 6512. At threonine 6518 the chain carries Phosphothreonine. The span at proline 6519–serine 6538 shows a compositional bias: low complexity. Phosphoserine is present on residues serine 6520 and serine 6522. Positions glutamate 6549–lysine 6616 constitute an SH3 domain. The 185-residue stretch at arginine 6642 to lysine 6826 folds into the DH domain. The PH domain occupies glutamate 6844–glutamine 6953. Arginine 6924 is an a 1,2-diacyl-sn-glycero-3-phospho-(1D-myo-inositol-4,5-bisphosphate) binding site. A 1,2-diacyl-sn-glycero-3-phospho-(1D-myo-inositol-3,4-bisphosphate) is bound at residue arginine 6929. Ig-like domains are found at residues proline 6963–serine 7046 and proline 7057–tyrosine 7147. Cystine bridges form between cysteine 6984/cysteine 7036 and cysteine 7078/cysteine 7131. Residues alanine 7200–tryptophan 7257 form a disordered region. Positions glutamine 7247–tryptophan 7257 are enriched in polar residues. Residues proline 7306–leucine 7394 enclose the Ig-like 54 domain. The 254-residue stretch at tyrosine 7416–phenylalanine 7669 folds into the Protein kinase 1 domain. Residues isoleucine 7422–valine 7430 and lysine 7445 contribute to the ATP site. Aspartate 7535 serves as the catalytic Proton acceptor. 3 disordered regions span residues glycine 7717–cysteine 7810, glutamate 7879–lysine 8106, and serine 8150–arginine 8180. Phosphoserine is present on serine 7779. Residues alanine 7793–proline 7804 show a composition bias toward low complexity. Residues threonine 7941 to phenylalanine 7952 show a composition bias toward basic and acidic residues. Residues serine 7986–glutamine 7996 show a composition bias toward polar residues. 2 stretches are compositionally biased toward low complexity: residues glycine 8000 to serine 8014 and glycine 8053 to valine 8073. Residue serine 8161 is modified to Phosphoserine. In terms of domain architecture, Ig-like 55 spans lysine 8380 to threonine 8464. Cysteines 8401 and 8453 form a disulfide. The region spanning proline 8474–proline 8566 is the Fibronectin type-III 3 domain. The region spanning phenylalanine 8590–leucine 8842 is the Protein kinase 2 domain. ATP-binding positions include isoleucine 8596–valine 8604 and lysine 8619. The Proton acceptor role is filled by aspartate 8709.

It belongs to the protein kinase superfamily. CAMK Ser/Thr protein kinase family. As to quaternary structure, interacts (via protein kinase domain 1) with CDH2 and (via protein kinase domain 1) with ATP1B1. Isoform 2 is found in a complex with DSG2, DESM, GJA1, CDH2 and VCL. Isoform 3 is found in a complex with DSG2, DESM, GJA1, CDH2, ANK3 and VCL. Mg(2+) serves as cofactor. In terms of processing, autophosphorylated by protein kinase domain 1 and 2. Post-translationally, two small isoforms, one probably containing protein kinase domain 2 and a partial protein kinase domain 1 and one containing only protein kinase domain 2, are glycosylated. In terms of tissue distribution, expressed in skeletal muscles including flexor digitorum brevis (FDB), soleus and tibialis anterior muscles, and to a lesser extent in heart muscles (at protein level). Isoform 2 and isoform 3 are expressed in the myocardium (at protein level).

Its subcellular location is the cytoplasm. It localises to the myofibril. The protein resides in the sarcomere. The protein localises to the m line. It is found in the z line. Its subcellular location is the cell membrane. It localises to the sarcolemma. The protein resides in the nucleus. The protein localises to the secreted. The enzyme catalyses L-seryl-[protein] + ATP = O-phospho-L-seryl-[protein] + ADP + H(+). It carries out the reaction L-threonyl-[protein] + ATP = O-phospho-L-threonyl-[protein] + ADP + H(+). In terms of biological role, structural component of striated muscles which plays a role in myofibrillogenesis. Probably involved in the assembly of myosin into sarcomeric A bands in striated muscle. Has serine/threonine protein kinase activity and phosphorylates N-cadherin CDH2 and sodium/potassium-transporting ATPase subunit ATP1B1. Binds (via the PH domain) strongly to phosphatidylinositol 3,4-bisphosphate (PtdIns(3,4)P2) and phosphatidylinositol 4,5-bisphosphate (PtdIns(4,5)P2), and to a lesser extent to phosphatidylinositol 3-phosphate (PtdIns(3)P), phosphatidylinositol 4-phosphate (PtdIns(4)P), phosphatidylinositol 5-phosphate (PtdIns(5)P) and phosphatidylinositol 3,4,5-trisphosphate (PtdIns(3,4,5)P3). Isoform 2 and isoform 3: bind phosphatidylinositol bisphosphates (PIP2s) via their PH domains and negatively regulate the PI3K/AKT/mTOR signaling pathway, thus contributing to the regulation of cardiomyocyte size and adhesion. This Mus musculus (Mouse) protein is Obscurin.